The following is a 196-amino-acid chain: Imidazoleglycerol-phosphate dehydratase (196 aa).

Belongs to the imidazoleglycerol-phosphate dehydratase family.

The protein resides in the cytoplasm. The enzyme catalyses D-erythro-1-(imidazol-4-yl)glycerol 3-phosphate = 3-(imidazol-4-yl)-2-oxopropyl phosphate + H2O. The protein operates within amino-acid biosynthesis; L-histidine biosynthesis; L-histidine from 5-phospho-alpha-D-ribose 1-diphosphate: step 6/9. The chain is Imidazoleglycerol-phosphate dehydratase from Desulforudis audaxviator (strain MP104C).